The primary structure comprises 487 residues: MASATDTVSAGSTPRDKVVTRFAPSPTGFLHIGGARTALFNWLYARHHGGTYLLRIEDTDRARSTDAAIDAIFDGLEWLGLGGDEPAVFQFARSDRHAEVAHKLLEAGHAYRCYLTQEELAARRELAQAERRPFRIDSEWRDATPDQWPADQSYVVRMKAPREGETTIVDKVQGSITVQNSELDDFIILRSDGTPTYMLAVVVDDHDMGVTHVIRGDDHINNAFRQLVIIRGMHAIEGGWPDPVYAHIPLIHGADGAKLSKRHGALGVDAYRDEMGLLPEAVFNYLLRLGWGHGDEEIISREQAVAWFDIGDVNKGASRFDLKKLLNLNGHYIREADDARLAALVAPRLATLAPGFAPDKGLDLLTRAMPVLKVRAADINELAAGSVFLFAQRPLAMAEKAASLLTDDARAILTKVAGVLEAENVWTTGVLEATVKQMAEELGIGLGKIAQPLRASLTGQTTSPGIFDVLALLGKDESLSRIRDQAA.

Positions 24–34 (PSPTGFLHIGG) match the 'HIGH' region motif. A 'KMSKS' region motif is present at residues 258–262 (KLSKR). An ATP-binding site is contributed by Lys-261.

The protein belongs to the class-I aminoacyl-tRNA synthetase family. Glutamate--tRNA ligase type 1 subfamily. Monomer.

Its subcellular location is the cytoplasm. The enzyme catalyses tRNA(Glu) + L-glutamate + ATP = L-glutamyl-tRNA(Glu) + AMP + diphosphate. Functionally, catalyzes the attachment of glutamate to tRNA(Glu) in a two-step reaction: glutamate is first activated by ATP to form Glu-AMP and then transferred to the acceptor end of tRNA(Glu). The polypeptide is Glutamate--tRNA ligase 2 (Novosphingobium aromaticivorans (strain ATCC 700278 / DSM 12444 / CCUG 56034 / CIP 105152 / NBRC 16084 / F199)).